The chain runs to 610 residues: Dapper homolog 3 (610 aa).

At Ser-6 the chain carries Phosphoserine. Disordered regions lie at residues Pro-50–Ala-76, Leu-102–Ala-179, and Thr-200–Pro-579. A compositionally biased stretch (acidic residues) spans Glu-56–Ala-69. Residues Ala-63–Pro-87 adopt a coiled-coil conformation. The span at Asp-120 to Ser-138 shows a compositional bias: low complexity. Ser-165 and Ser-237 each carry phosphoserine. Arg-255 carries the omega-N-methylarginine modification. The segment covering Pro-317–Ser-331 has biased composition (pro residues). Over residues Pro-344–Arg-356 the composition is skewed to low complexity. Phosphoserine occurs at positions 409 and 456. Positions Pro-475–Pro-485 are enriched in pro residues. Positions Glu-524–Asp-545 are enriched in low complexity. Over residues Gly-566 to Pro-576 the composition is skewed to gly residues. The PDZ-binding motif lies at Met-607–Val-610.

It belongs to the dapper family. In terms of assembly, can form homodimers and heterodimers with DACT1 or DACT3. Interacts with CSNK1D, PKA catalytic subunit, PKC-type kinase, DVL1, DVL2, DVL3, VANGL1, VANGL2 and CTNND1. Expressed in brain and uterus.

May be involved in regulation of intracellular signaling pathways during development. Specifically thought to play a role in canonical and/or non-canonical Wnt signaling pathways through interaction with DSH (Dishevelled) family proteins. The protein is Dapper homolog 3 (Dact3) of Mus musculus (Mouse).